We begin with the raw amino-acid sequence, 666 residues long: LEAF RUST 10 DISEASE-RESISTANCE LOCUS RECEPTOR-LIKE PROTEIN KINASE-like 2.5 (666 aa).

Residues 1 to 30 form the signal peptide; sequence MINFSLSLTKSMSYSFIWMLFVIHISCVLS. Over 31–275 the chain is Extracellular; the sequence is ADGNHILCSP…PTRNKVILKL (245 aa). Residues asparagine 119, asparagine 141, asparagine 171, and asparagine 198 are each glycosylated (N-linked (GlcNAc...) asparagine). The chain crosses the membrane as a helical span at residues 276–296; the sequence is FFIVIYVLGIGAASFAMMGVI. The Cytoplasmic segment spans residues 297 to 666; that stretch reads LVVTCLNCLI…YTEICSINVA (370 aa). The Protein kinase domain occupies 348 to 636; it reads KSFAEVIGKG…ALEVPPRPVL (289 aa). ATP is bound by residues 354-362 and lysine 376; that span reads IGKGGFGTV. The residue at position 420 (tyrosine 420) is a Phosphotyrosine. Residue aspartate 471 is the Proton acceptor of the active site. Residues threonine 508 and threonine 511 each carry the phosphothreonine modification.

The protein belongs to the protein kinase superfamily. Ser/Thr protein kinase family.

The protein resides in the membrane. The enzyme catalyses L-seryl-[protein] + ATP = O-phospho-L-seryl-[protein] + ADP + H(+). The catalysed reaction is L-threonyl-[protein] + ATP = O-phospho-L-threonyl-[protein] + ADP + H(+). This Arabidopsis thaliana (Mouse-ear cress) protein is LEAF RUST 10 DISEASE-RESISTANCE LOCUS RECEPTOR-LIKE PROTEIN KINASE-like 2.5.